A 264-amino-acid polypeptide reads, in one-letter code: Thymidylate synthase (264 aa).

Residue arginine 21 participates in dUMP binding. Histidine 51 lines the (6R)-5,10-methylene-5,6,7,8-tetrahydrofolate pocket. Position 126–127 (126–127) interacts with dUMP; that stretch reads RR. The active-site Nucleophile is the cysteine 146. DUMP is bound by residues 166–169, asparagine 177, and 207–209; these read RSAD and HLY. Residue aspartate 169 coordinates (6R)-5,10-methylene-5,6,7,8-tetrahydrofolate. Position 263 (alanine 263) interacts with (6R)-5,10-methylene-5,6,7,8-tetrahydrofolate.

The protein belongs to the thymidylate synthase family. Bacterial-type ThyA subfamily. Homodimer.

It localises to the cytoplasm. The catalysed reaction is dUMP + (6R)-5,10-methylene-5,6,7,8-tetrahydrofolate = 7,8-dihydrofolate + dTMP. It functions in the pathway pyrimidine metabolism; dTTP biosynthesis. Functionally, catalyzes the reductive methylation of 2'-deoxyuridine-5'-monophosphate (dUMP) to 2'-deoxythymidine-5'-monophosphate (dTMP) while utilizing 5,10-methylenetetrahydrofolate (mTHF) as the methyl donor and reductant in the reaction, yielding dihydrofolate (DHF) as a by-product. This enzymatic reaction provides an intracellular de novo source of dTMP, an essential precursor for DNA biosynthesis. This is Thymidylate synthase from Allorhizobium ampelinum (strain ATCC BAA-846 / DSM 112012 / S4) (Agrobacterium vitis (strain S4)).